A 103-amino-acid polypeptide reads, in one-letter code: Large ribosomal subunit protein bL21 (103 aa).

It belongs to the bacterial ribosomal protein bL21 family. In terms of assembly, part of the 50S ribosomal subunit. Contacts protein L20.

In terms of biological role, this protein binds to 23S rRNA in the presence of protein L20. The protein is Large ribosomal subunit protein bL21 of Aliivibrio fischeri (strain ATCC 700601 / ES114) (Vibrio fischeri).